The sequence spans 176 residues: SsrA-binding protein (176 aa).

The segment at 1–33 (MTEAGAKKAAGKKSGKGKGKNAKKNQPNITPVA) is disordered. The span at 9–23 (AAGKKSGKGKGKNAK) shows a compositional bias: basic residues.

This sequence belongs to the SmpB family.

It is found in the cytoplasm. Required for rescue of stalled ribosomes mediated by trans-translation. Binds to transfer-messenger RNA (tmRNA), required for stable association of tmRNA with ribosomes. tmRNA and SmpB together mimic tRNA shape, replacing the anticodon stem-loop with SmpB. tmRNA is encoded by the ssrA gene; the 2 termini fold to resemble tRNA(Ala) and it encodes a 'tag peptide', a short internal open reading frame. During trans-translation Ala-aminoacylated tmRNA acts like a tRNA, entering the A-site of stalled ribosomes, displacing the stalled mRNA. The ribosome then switches to translate the ORF on the tmRNA; the nascent peptide is terminated with the 'tag peptide' encoded by the tmRNA and targeted for degradation. The ribosome is freed to recommence translation, which seems to be the essential function of trans-translation. The protein is SsrA-binding protein of Rhodopirellula baltica (strain DSM 10527 / NCIMB 13988 / SH1).